The primary structure comprises 235 residues: Ribosomal RNA small subunit methyltransferase G (235 aa).

S-adenosyl-L-methionine-binding positions include glycine 74, leucine 79, 124-125, and arginine 142; that span reads AE. The disordered stretch occupies residues 211–235; sequence RRRAAKPGRNKSGRTARSRGRTGRR. The span at 213 to 235 shows a compositional bias: basic residues; that stretch reads RAAKPGRNKSGRTARSRGRTGRR.

The protein belongs to the methyltransferase superfamily. RNA methyltransferase RsmG family.

It localises to the cytoplasm. In terms of biological role, specifically methylates the N7 position of guanine in position 518 of 16S rRNA. The polypeptide is Ribosomal RNA small subunit methyltransferase G (Mycolicibacterium smegmatis (strain ATCC 700084 / mc(2)155) (Mycobacterium smegmatis)).